The primary structure comprises 514 residues: Importin subunit alpha-3 (514 aa).

Positions 1-51 constitute an IBB domain; the sequence is MSSNRQAYYKNNAKEQIGKEKRNEEVVSIRKDKREEAISKRRNINTQIEDD. The tract at residues 1–62 is disordered; sequence MSSNRQAYYK…ETSTTPPGPF (62 aa). Residues 12–39 show a composition bias toward basic and acidic residues; the sequence is NAKEQIGKEKRNEEVVSIRKDKREEAIS. ARM repeat units follow at residues 101–142, 143–187, 188–226, 227–271, 272–311, 312–353, 354–393, and 394–436; these read IDDL…TSEQ, TQAV…FRDY, CLEL…CKDP, APSP…EHIQ, MVIE…TDEQ, TQLV…NQQQ, VQDV…ISGR, and PNQV…KMAG. The interval 485–514 is disordered; that stretch reads GNVEGAQSSAFGGDVPPVPDAPNGGWNFGK.

Belongs to the importin alpha family. Forms a complex with an importin beta subunit. May interact with transcription factor cebp-1 (via N-terminus). Interacts with cmk-1; affinity for cmk-1 is increased in the presence of Ca(2+) and calmodulin and leads to increased nuclear accumulation of cmk-1 in FLP neurons upon prolonged heat activation. In terms of tissue distribution, expressed in larval and adult germline and somatic tissues, including neurons.

Its subcellular location is the cytoplasm. The protein localises to the nucleus. Binds specifically and directly to substrates containing either a simple or bipartite NLS motif. Promotes docking of import substrates to the nuclear envelope. Seems to act as a cytosolic receptor for both simple and bipartite NLS motifs. Necessary for correct nucleoporin localization within the germline. Essential gene for embryonic and larval development. May be dispensable for axon development, but required for axon regeneration in both mechanosensory and motor neurons. Required for oogenic development, ima-1 and ima-2 cannot functionally compensate for loss of ima-3. The chain is Importin subunit alpha-3 (ima-3) from Caenorhabditis elegans.